Reading from the N-terminus, the 739-residue chain is Phosphoribosylformylglycinamidine synthase subunit PurL (739 aa).

Residue histidine 54 is part of the active site. Residues tyrosine 57 and lysine 96 each contribute to the ATP site. Residue glutamate 98 participates in Mg(2+) binding. Residues 99-102 (SHNH) and arginine 121 each bind substrate. The Proton acceptor role is filled by histidine 100. A Mg(2+)-binding site is contributed by aspartate 122. Glutamine 245 lines the substrate pocket. Aspartate 275 provides a ligand contact to Mg(2+). 319-321 (ESQ) lines the substrate pocket. 2 residues coordinate ATP: aspartate 504 and glycine 541. A Mg(2+)-binding site is contributed by asparagine 542. A substrate-binding site is contributed by serine 544.

This sequence belongs to the FGAMS family. Monomer. Part of the FGAM synthase complex composed of 1 PurL, 1 PurQ and 2 PurS subunits.

It is found in the cytoplasm. It catalyses the reaction N(2)-formyl-N(1)-(5-phospho-beta-D-ribosyl)glycinamide + L-glutamine + ATP + H2O = 2-formamido-N(1)-(5-O-phospho-beta-D-ribosyl)acetamidine + L-glutamate + ADP + phosphate + H(+). Its pathway is purine metabolism; IMP biosynthesis via de novo pathway; 5-amino-1-(5-phospho-D-ribosyl)imidazole from N(2)-formyl-N(1)-(5-phospho-D-ribosyl)glycinamide: step 1/2. In terms of biological role, part of the phosphoribosylformylglycinamidine synthase complex involved in the purines biosynthetic pathway. Catalyzes the ATP-dependent conversion of formylglycinamide ribonucleotide (FGAR) and glutamine to yield formylglycinamidine ribonucleotide (FGAM) and glutamate. The FGAM synthase complex is composed of three subunits. PurQ produces an ammonia molecule by converting glutamine to glutamate. PurL transfers the ammonia molecule to FGAR to form FGAM in an ATP-dependent manner. PurS interacts with PurQ and PurL and is thought to assist in the transfer of the ammonia molecule from PurQ to PurL. The sequence is that of Phosphoribosylformylglycinamidine synthase subunit PurL from Lactococcus lactis subsp. cremoris (Streptococcus cremoris).